The primary structure comprises 362 residues: Anthranilate phosphoribosyltransferase (362 aa).

Residues G96, 99-100 (GD), T104, 106-109 (NIST), 124-132 (KHGNRAASS), and G136 each bind 5-phospho-alpha-D-ribose 1-diphosphate. Residue G96 participates in anthranilate binding. Position 108 (S108) interacts with Mg(2+). N127 is an anthranilate binding site. R182 is an anthranilate binding site. Mg(2+) is bound by residues D240 and E241.

The protein belongs to the anthranilate phosphoribosyltransferase family. In terms of assembly, homodimer. Mg(2+) serves as cofactor.

The enzyme catalyses N-(5-phospho-beta-D-ribosyl)anthranilate + diphosphate = 5-phospho-alpha-D-ribose 1-diphosphate + anthranilate. It participates in amino-acid biosynthesis; L-tryptophan biosynthesis; L-tryptophan from chorismate: step 2/5. Catalyzes the transfer of the phosphoribosyl group of 5-phosphorylribose-1-pyrophosphate (PRPP) to anthranilate to yield N-(5'-phosphoribosyl)-anthranilate (PRA). In Rhodococcus opacus (strain B4), this protein is Anthranilate phosphoribosyltransferase.